We begin with the raw amino-acid sequence, 926 residues long: Alpha-aminoadipic semialdehyde synthase, mitochondrial (926 aa).

The transit peptide at 1 to 27 directs the protein to the mitochondrion; sequence MLQVHRTGLGRLGVSLSKGLHHKAVLA. The tract at residues 28-476 is lysine-ketoglutarate reductase; that stretch reads VRREDVNAWE…ESRERAQSLS (449 aa). N6-acetyllysine occurs at positions 48 and 56. Position 93 is an N6-acetyllysine; alternate (K93). K93 carries the N6-succinyllysine; alternate modification. N6-acetyllysine is present on K128. At K138 the chain carries N6-acetyllysine; alternate. At K138 the chain carries N6-succinyllysine; alternate. At K274 the chain carries N6-succinyllysine. K286 bears the N6-acetyllysine; alternate mark. K286 is subject to N6-succinyllysine; alternate. At K333 the chain carries N6-succinyllysine. K458 carries the N6-acetyllysine; alternate modification. K458 carries the N6-succinyllysine; alternate modification. Residues 477–926 form a saccharopine dehydrogenase region; sequence MGTRRKVLVL…IYTTQSTIKP (450 aa). The NAD(+) site is built by S488, D512, and Q516. At K523 the chain carries N6-acetyllysine; alternate. K523 is modified (N6-succinyllysine; alternate). Residue I533 participates in NAD(+) binding. Residue K535 is modified to N6-acetyllysine; alternate. The residue at position 535 (K535) is an N6-succinyllysine; alternate. 3 residues coordinate NAD(+): L554, A576, and S577. An L-saccharopine-binding site is contributed by 577–578; that stretch reads SY. At K584 the chain carries N6-acetyllysine; alternate. At K584 the chain carries N6-succinyllysine; alternate. The NAD(+) site is built by L603, D604, and P605. Residue D604 coordinates L-saccharopine. R703 contributes to the L-saccharopine binding site. K707 bears the N6-acetyllysine mark. Position 724–726 (724–726) interacts with L-saccharopine; sequence TLR. K732 carries the post-translational modification N6-succinyllysine. K739 bears the N6-acetyllysine mark. K761 is modified (N6-acetyllysine; alternate). An N6-succinyllysine; alternate modification is found at K761. An N6-acetyllysine modification is found at K780.

In the N-terminal section; belongs to the AlaDH/PNT family. This sequence in the C-terminal section; belongs to the saccharopine dehydrogenase family. In terms of assembly, homotetramer. In terms of tissue distribution, expressed in all 16 tissues examined with highest expression in the liver.

The protein localises to the mitochondrion. It catalyses the reaction L-saccharopine + NADP(+) + H2O = L-lysine + 2-oxoglutarate + NADPH + H(+). The catalysed reaction is L-saccharopine + NAD(+) + H2O = (S)-2-amino-6-oxohexanoate + L-glutamate + NADH + H(+). The protein operates within amino-acid degradation; L-lysine degradation via saccharopine pathway; glutaryl-CoA from L-lysine: step 1/6. It functions in the pathway amino-acid degradation; L-lysine degradation via saccharopine pathway; glutaryl-CoA from L-lysine: step 2/6. Bifunctional enzyme that catalyzes the first two steps in lysine degradation. The polypeptide is Alpha-aminoadipic semialdehyde synthase, mitochondrial (Homo sapiens (Human)).